Here is a 594-residue protein sequence, read N- to C-terminus: Gamma-terpinene synthase, chloroplastic (594 aa).

Residues 1 to 44 constitute a chloroplast transit peptide; sequence MATLSMQVSILSKEVKNVNNIGMRASKPMVARRVSTTRLRPICS. Mn(2+) contacts are provided by Asp347 and Asp351. The short motif at 347 to 351 is the DDXXD motif element; it reads DDVYD. 2 homodimerization regions span residues 353–359 and 425–462; these read YGTLDEL and EAKWYYAGYTPTLAEYLENAKVSISSPTIISQVYFTLP. Mn(2+) contacts are provided by Asp491 and Glu499.

Belongs to the terpene synthase family. In terms of assembly, homodimer. It depends on Mn(2+) as a cofactor. Mg(2+) is required as a cofactor. In terms of tissue distribution, expressed in peltate glandular trichomes.

The protein resides in the plastid. It is found in the chloroplast. The enzyme catalyses (2E)-geranyl diphosphate = gamma-terpinene + diphosphate. It catalyses the reaction (2E)-geranyl diphosphate = alpha-terpinene + diphosphate. It functions in the pathway secondary metabolite biosynthesis; terpenoid biosynthesis. In terms of biological role, involved in the biosynthesis of phenolic monoterpenes natural products thymol and carvacrol which have a broad range of biological activities acting as antimicrobial compounds, insecticides, antioxidants and pharmaceutical agents. Monoterpene synthase which catalyzes the conversion of geranyl diphosphate (GPP) to gamma-terpinene and the minor products alpha-thujene, alpha-terpinene, myrcene, sabinene, (+)-R-limonene, alpha-pinene and alpha-phellandrene. This chain is Gamma-terpinene synthase, chloroplastic, found in Origanum vulgare (Wild marjoram).